The sequence spans 947 residues: Protein translocase subunit SecA (947 aa).

ATP contacts are provided by residues Q87, 105–109 (GEGKT), and D494. The tract at residues 860-947 (TAPKPLPTQE…NRAPKSKRKR (88 aa)) is disordered. The span at 870–885 (AAARTTGTAAPTALRA) shows a compositional bias: low complexity. Basic and acidic residues-rich tracts occupy residues 903-914 (EDGKAKATRDSA) and 922-931 (ASRRERREAA).

This sequence belongs to the SecA family. In terms of assembly, monomer and homodimer. Part of the essential Sec protein translocation apparatus which comprises SecA, SecYEG and auxiliary proteins SecDF. Other proteins may also be involved.

It is found in the cell membrane. It localises to the cytoplasm. It carries out the reaction ATP + H2O + cellular proteinSide 1 = ADP + phosphate + cellular proteinSide 2.. Functionally, part of the Sec protein translocase complex. Interacts with the SecYEG preprotein conducting channel. Has a central role in coupling the hydrolysis of ATP to the transfer of proteins into and across the cell membrane, serving as an ATP-driven molecular motor driving the stepwise translocation of polypeptide chains across the membrane. The sequence is that of Protein translocase subunit SecA from Rhodococcus erythropolis (strain PR4 / NBRC 100887).